We begin with the raw amino-acid sequence, 599 residues long: MKKSQKRISNVSEIKAQLKTVETKVHNGVFLFSGIMTIAELAQKINVSVNQIITYFFHQAKMYNLNHSLSEDEIAEICLEFGLDFKKEVQIDASNFMEEVSILDQDKDLSPRPPIITVMGHVDHGKTTLLDYIRKTNIAKNEKGGITQHTGAYQVVFQGHIINFIDTPGHEAFTQMRARGAKVTDIIVLVVAADDGVMPQTKEAINHAAAANVPIIVFVNKMDKPNKDVDRIKNELSALNIVTEEWGGSNIFVYGSALTGQGIDTLFSSILLLAEILELKANKNRYPIGTVIEAKLHHNKGTIATLMVQNGTLMVRDFIVAGYQYGRIRSLENTNGQPIKFAPPGTPVIVTGLNYVPEAGDKFFGFHEEKFAKQLALERKQSEKISKTKVQTKQQTKEKTLNIIIKADVAGIAQALHSTIEKLASKQVHIHILHSGVGIVNKADILLAQTSNSIIYAFNLQIPAAIKAQAKQAQVEIREHTIIYKIVDEIKKQVRGMREIRYELQQIGTAKIIAKFWFSKVGSIAGCSVLSGKFVENCKIELWRNSKLIHSGKIESLQRDKNPVKEVQVGNEFGTHIYKFNDIEIGDELKAFLDVEIEE.

The region spanning 111-278 is the tr-type G domain; sequence PRPPIITVMG…SILLLAEILE (168 aa). The G1 stretch occupies residues 120 to 127; it reads GHVDHGKT. 120–127 provides a ligand contact to GTP; that stretch reads GHVDHGKT. Positions 145 to 149 are G2; that stretch reads GITQH. The G3 stretch occupies residues 166 to 169; the sequence is DTPG. GTP contacts are provided by residues 166-170 and 220-223; these read DTPGH and NKMD. Positions 220-223 are G4; that stretch reads NKMD. The G5 stretch occupies residues 256-258; sequence SAL.

The protein belongs to the TRAFAC class translation factor GTPase superfamily. Classic translation factor GTPase family. IF-2 subfamily.

The protein localises to the cytoplasm. One of the essential components for the initiation of protein synthesis. Protects formylmethionyl-tRNA from spontaneous hydrolysis and promotes its binding to the 30S ribosomal subunits. Also involved in the hydrolysis of GTP during the formation of the 70S ribosomal complex. This Mesomycoplasma hyopneumoniae (strain 232) (Mycoplasma hyopneumoniae) protein is Translation initiation factor IF-2.